A 1058-amino-acid chain; its full sequence is Carbamoyl phosphate synthase large chain (1058 aa).

The interval 1–401 (MPKRTDIQKI…SLLKACRSLE (401 aa)) is carboxyphosphate synthetic domain. Residues Arg-129, Arg-169, Gly-175, Gly-176, Arg-208, Ile-210, Glu-215, Gly-241, Ile-242, His-243, Gln-284, and Glu-298 each coordinate ATP. The ATP-grasp 1 domain occupies 133–327 (KQLMEELEQP…IAKLAAKIAV (195 aa)). Positions 284, 298, and 300 each coordinate Mg(2+). Mn(2+)-binding residues include Gln-284, Glu-298, and Asn-300. The interval 402-546 (IGVHHNEIPE…YSTYGWENES (145 aa)) is oligomerization domain. The segment at 547 to 929 (IRSDKESVLV…ALYKAFEASY (383 aa)) is carbamoyl phosphate synthetic domain. The ATP-grasp 2 domain occupies 671–861 (EQALKELDIP…MAQVATKLIL (191 aa)). Positions 707, 746, 748, 752, 777, 778, 779, 780, 820, and 832 each coordinate ATP. Residues Gln-820, Glu-832, and Asn-834 each contribute to the Mg(2+) site. Residues Gln-820, Glu-832, and Asn-834 each contribute to the Mn(2+) site. Residues 930–1058 (LHLPTFGNVV…ESRSFVTEAI (129 aa)) form the MGS-like domain. An allosteric domain region spans residues 930–1058 (LHLPTFGNVV…ESRSFVTEAI (129 aa)).

It belongs to the CarB family. Composed of two chains; the small (or glutamine) chain promotes the hydrolysis of glutamine to ammonia, which is used by the large (or ammonia) chain to synthesize carbamoyl phosphate. Tetramer of heterodimers (alpha,beta)4. The cofactor is Mg(2+). Requires Mn(2+) as cofactor.

It catalyses the reaction hydrogencarbonate + L-glutamine + 2 ATP + H2O = carbamoyl phosphate + L-glutamate + 2 ADP + phosphate + 2 H(+). It carries out the reaction hydrogencarbonate + NH4(+) + 2 ATP = carbamoyl phosphate + 2 ADP + phosphate + 2 H(+). Its pathway is amino-acid biosynthesis; L-arginine biosynthesis; carbamoyl phosphate from bicarbonate: step 1/1. It participates in pyrimidine metabolism; UMP biosynthesis via de novo pathway; (S)-dihydroorotate from bicarbonate: step 1/3. Functionally, large subunit of the glutamine-dependent carbamoyl phosphate synthetase (CPSase). CPSase catalyzes the formation of carbamoyl phosphate from the ammonia moiety of glutamine, carbonate, and phosphate donated by ATP, constituting the first step of 2 biosynthetic pathways, one leading to arginine and/or urea and the other to pyrimidine nucleotides. The large subunit (synthetase) binds the substrates ammonia (free or transferred from glutamine from the small subunit), hydrogencarbonate and ATP and carries out an ATP-coupled ligase reaction, activating hydrogencarbonate by forming carboxy phosphate which reacts with ammonia to form carbamoyl phosphate. This Streptococcus pneumoniae (strain ATCC BAA-255 / R6) protein is Carbamoyl phosphate synthase large chain.